The chain runs to 356 residues: 3-dehydroquinate synthase (356 aa).

NAD(+) contacts are provided by residues 69 to 74 (DGEKFK), 103 to 107 (GVIGD), 127 to 128 (TT), Lys-140, Lys-149, and 167 to 170 (CLKT). Positions 182, 245, and 262 each coordinate Zn(2+).

It belongs to the sugar phosphate cyclases superfamily. Dehydroquinate synthase family. The cofactor is Co(2+). Zn(2+) serves as cofactor. It depends on NAD(+) as a cofactor.

The protein localises to the cytoplasm. It catalyses the reaction 7-phospho-2-dehydro-3-deoxy-D-arabino-heptonate = 3-dehydroquinate + phosphate. The protein operates within metabolic intermediate biosynthesis; chorismate biosynthesis; chorismate from D-erythrose 4-phosphate and phosphoenolpyruvate: step 2/7. In terms of biological role, catalyzes the conversion of 3-deoxy-D-arabino-heptulosonate 7-phosphate (DAHP) to dehydroquinate (DHQ). This is 3-dehydroquinate synthase from Psychromonas ingrahamii (strain DSM 17664 / CCUG 51855 / 37).